Here is a 75-residue protein sequence, read N- to C-terminus: Small ribosomal subunit protein bS18 (75 aa).

This sequence belongs to the bacterial ribosomal protein bS18 family. As to quaternary structure, part of the 30S ribosomal subunit. Forms a tight heterodimer with protein bS6.

Binds as a heterodimer with protein bS6 to the central domain of the 16S rRNA, where it helps stabilize the platform of the 30S subunit. The sequence is that of Small ribosomal subunit protein bS18 from Psychromonas ingrahamii (strain DSM 17664 / CCUG 51855 / 37).